A 215-amino-acid polypeptide reads, in one-letter code: Somatotropin (215 aa).

Residues 1–25 (MAPGMRVCLLLLIAFTLLGPQRAAA) form the signal peptide. His44 serves as a coordination point for Zn(2+). The residue at position 130 (Ser130) is a Phosphoserine. Glu197 serves as a coordination point for Zn(2+).

Belongs to the somatotropin/prolactin family.

Its subcellular location is the secreted. Its function is as follows. Plays an important role in growth control. Its major role in stimulating body growth is to stimulate the liver and other tissues to secrete IGF1. It stimulates both the differentiation and proliferation of myoblasts. It also stimulates amino acid uptake and protein synthesis in muscle and other tissues. The polypeptide is Somatotropin (GH1) (Monodelphis domestica (Gray short-tailed opossum)).